Here is a 224-residue protein sequence, read N- to C-terminus: MMQFDRSGLDGSPVDYETALQLQRRLHGEVATGTTAETMLLLEHAPVYTAGKRTTDDERPTDGTPVVDVDRGGKITWHGPGQLVGYPILRLREPVDVVGYVRRLESALIRVLGELGIAGERIEGRSGVWLPGDGTAPDRKLAAIGIRVAEGVTMHGFALNCSNSLEAYDRIVACGIRDAGVSTITEALGRTVTPQDAAPMVVAALQAEFGREAAPRAAQTETAA.

The 181-residue stretch at 33-213 (GTTAETMLLL…ALQAEFGREA (181 aa)) folds into the BPL/LPL catalytic domain. Residues 51 to 71 (GKRTTDDERPTDGTPVVDVDR) form a disordered region. Substrate contacts are provided by residues 71–78 (RGGKITWH), 143–145 (AIG), and 156–158 (GFA). The active-site Acyl-thioester intermediate is the Cys174.

The protein belongs to the LipB family.

The protein localises to the cytoplasm. The enzyme catalyses octanoyl-[ACP] + L-lysyl-[protein] = N(6)-octanoyl-L-lysyl-[protein] + holo-[ACP] + H(+). Its pathway is protein modification; protein lipoylation via endogenous pathway; protein N(6)-(lipoyl)lysine from octanoyl-[acyl-carrier-protein]: step 1/2. Functionally, catalyzes the transfer of endogenously produced octanoic acid from octanoyl-acyl-carrier-protein onto the lipoyl domains of lipoate-dependent enzymes. Lipoyl-ACP can also act as a substrate although octanoyl-ACP is likely to be the physiological substrate. The protein is Octanoyltransferase of Leifsonia xyli subsp. xyli (strain CTCB07).